The primary structure comprises 356 residues: Biotin synthase (356 aa).

Residues 54–278 (GEVQLCTLLS…VAVARITMPL (225 aa)) form the Radical SAM core domain. The [4Fe-4S] cluster site is built by C69, C73, and C76. [2Fe-2S] cluster is bound by residues C113, C144, C204, and R282.

The protein belongs to the radical SAM superfamily. Biotin synthase family. Homodimer. [4Fe-4S] cluster serves as cofactor. Requires [2Fe-2S] cluster as cofactor.

It carries out the reaction (4R,5S)-dethiobiotin + (sulfur carrier)-SH + 2 reduced [2Fe-2S]-[ferredoxin] + 2 S-adenosyl-L-methionine = (sulfur carrier)-H + biotin + 2 5'-deoxyadenosine + 2 L-methionine + 2 oxidized [2Fe-2S]-[ferredoxin]. It participates in cofactor biosynthesis; biotin biosynthesis; biotin from 7,8-diaminononanoate: step 2/2. In terms of biological role, catalyzes the conversion of dethiobiotin (DTB) to biotin by the insertion of a sulfur atom into dethiobiotin via a radical-based mechanism. The sequence is that of Biotin synthase from Novosphingobium aromaticivorans (strain ATCC 700278 / DSM 12444 / CCUG 56034 / CIP 105152 / NBRC 16084 / F199).